The following is a 138-amino-acid chain: Gamma-glutamylaminecyclotransferase (138 aa).

The Proton acceptor role is filled by E63.

This sequence belongs to the gamma-glutamylcyclotransferase family.

The catalysed reaction is epsilon-(gamma-L-glutamyl)-L-lysine = 5-oxo-L-proline + L-lysine. In terms of biological role, may contribute to degradation of proteins cross-linked by transglutaminases by degrading the cross-link between a lysine and a glutamic acid residue. Catalyzes the formation of 5-oxo-L-proline from L-gamma-glutamyl-L-epsilon-lysine. In Xenopus laevis (African clawed frog), this protein is Gamma-glutamylaminecyclotransferase (ggact).